We begin with the raw amino-acid sequence, 252 residues long: MGQKVNPTGFRLGIIKDWTSRWYDDSPVISGKIKEDHVIRNYVQTRLKREKAGIARIIIERTTKHIKINIYAARPGAVVGRKGEEINNLSQELGRITGKEVKIDVVEVVKPEIESQLIGESIAYQLENRVSFRRAMKMAIQQAMRAGAEGVRIRCAGRLGGAEIARAEQYKEGKIPLHTIRANVDYASVTAHTIAGTIGIKVWVYKGEVLNQRIDAIEEEEMKRIKERRSDSGPRSRNDRSQKRRRRPNDRG.

One can recognise a KH type-2 domain in the interval 39-109 (IRNYVQTRLK…EVKIDVVEVV (71 aa)). Residues 221-241 (EMKRIKERRSDSGPRSRNDRS) are compositionally biased toward basic and acidic residues. The segment at 221 to 252 (EMKRIKERRSDSGPRSRNDRSQKRRRRPNDRG) is disordered. The span at 242–252 (QKRRRRPNDRG) shows a compositional bias: basic residues.

The protein belongs to the universal ribosomal protein uS3 family. In terms of assembly, part of the 30S ribosomal subunit. Forms a tight complex with proteins S10 and S14.

Its function is as follows. Binds the lower part of the 30S subunit head. Binds mRNA in the 70S ribosome, positioning it for translation. The protein is Small ribosomal subunit protein uS3 of Chlorobium luteolum (strain DSM 273 / BCRC 81028 / 2530) (Pelodictyon luteolum).